A 312-amino-acid polypeptide reads, in one-letter code: Olfactory receptor 6Z7 (312 aa).

The Extracellular portion of the chain corresponds to 1–29 (MERSLALANMTRVQQFILLGLSTRLDIRD). N9 is a glycosylation site (N-linked (GlcNAc...) asparagine). A helical membrane pass occupies residues 30–50 (ALFAVFLTLYLLTLLENTLII). Over 51–69 (YLICSHKELHKPMYFFLGN) the chain is Cytoplasmic. Residues 70–90 (LSCLEMCYVSVTMPTLLMGLW) form a helical membrane-spanning segment. N91 is a topological domain (extracellular). A helical membrane pass occupies residues 92 to 112 (GLYHIPFIACMTQLFFFIVLV). Residues C101 and C193 are joined by a disulfide bond. Residues 113 to 141 (GTECILLASMAYDRYVAICRPLHYPVLMR) are Cytoplasmic-facing. Residues 142–162 (PQVCLGLAMISWLGGLLVSMI) form a helical membrane-spanning segment. Residues 163 to 195 (KTTCIATLSYCGPNVLNHFFCDVSPLLNLSCTH) lie on the Extracellular side of the membrane. An N-linked (GlcNAc...) asparagine glycan is attached at N190. A helical transmembrane segment spans residues 196–216 (VALTELVDFISAIVILWGCFL). Residues 217–241 (TTMASYVAIGRAVLRMPSTTARYKA) lie on the Cytoplasmic side of the membrane. A helical membrane pass occupies residues 242 to 262 (FSTCASHLVVVGIFYSVTIFI). The Extracellular portion of the chain corresponds to 263-275 (YARPKRIEAMDLN). Residues 276 to 296 (KVLSVIYTVVTPMCNPVIYCL) traverse the membrane as a helical segment. Topologically, residues 297 to 312 (RNKEVQVALHRTMHWS) are cytoplasmic.

Belongs to the G-protein coupled receptor 1 family.

It localises to the cell membrane. Odorant receptor. The protein is Olfactory receptor 6Z7 of Mus musculus (Mouse).